The chain runs to 86 residues: Acyl carrier protein (86 aa).

In terms of domain architecture, Carrier spans 10–85 (DKIEQKVIEM…DVIQYIKERQ (76 aa)). Position 45 is an O-(pantetheine 4'-phosphoryl)serine (S45).

This sequence belongs to the acyl carrier protein (ACP) family. 4'-phosphopantetheine is transferred from CoA to a specific serine of apo-ACP by AcpS. This modification is essential for activity because fatty acids are bound in thioester linkage to the sulfhydryl of the prosthetic group.

Its subcellular location is the cytoplasm. It functions in the pathway lipid metabolism; fatty acid biosynthesis. Carrier of the growing fatty acid chain in fatty acid biosynthesis. This Rickettsia canadensis (strain McKiel) protein is Acyl carrier protein.